A 308-amino-acid chain; its full sequence is D-alanine--D-alanine ligase (308 aa).

In terms of domain architecture, ATP-grasp spans 105–302 (KAIFKALGLD…FPELCERILD (198 aa)). 133 to 188 (DLPFGVPCVVKPAGEGSSVGVQIVKDAARLADACREAARYKGDVVVERYVKGTEVN) is a binding site for ATP. Mg(2+)-binding residues include Asp256, Glu269, and Asn271.

It belongs to the D-alanine--D-alanine ligase family. It depends on Mg(2+) as a cofactor. Requires Mn(2+) as cofactor.

The protein localises to the cytoplasm. The enzyme catalyses 2 D-alanine + ATP = D-alanyl-D-alanine + ADP + phosphate + H(+). Its pathway is cell wall biogenesis; peptidoglycan biosynthesis. Its function is as follows. Cell wall formation. The protein is D-alanine--D-alanine ligase of Anaeromyxobacter sp. (strain Fw109-5).